The following is a 390-amino-acid chain: Olfactomedin-like protein 3A (390 aa).

The N-terminal stretch at 1-17 (MRALQLLVLVLSGLVGA) is a signal peptide. A coiled-coil region spans residues 18 to 91 (QQQALMDYLE…RVDRVEREMD (74 aa)). The Olfactomedin-like domain maps to 130–386 (DCSDMISSIK…QILYKLQLKK (257 aa)). C131 and C313 are oxidised to a cystine. Residue N169 is glycosylated (N-linked (GlcNAc...) asparagine).

Belongs to the OLFML3 family.

The protein resides in the secreted. Functionally, secreted scaffold protein that plays an essential role in dorsoventral patterning during early development. Stabilizes axial formation by restricting chordin (CHRD) activity on the dorsal side. Acts by facilitating the association between the tolloid proteases and their substrate chordin (CHRD), leading to enhance chordin (CHRD) degradation. The sequence is that of Olfactomedin-like protein 3A (olfml3a) from Danio rerio (Zebrafish).